The sequence spans 368 residues: tRNA(Met) cytidine acetate ligase (368 aa).

Residues Ile-7–Leu-20, Gly-96, Asn-152, and Arg-175 contribute to the ATP site.

Belongs to the TmcAL family.

It is found in the cytoplasm. It catalyses the reaction cytidine(34) in elongator tRNA(Met) + acetate + ATP = N(4)-acetylcytidine(34) in elongator tRNA(Met) + AMP + diphosphate. Functionally, catalyzes the formation of N(4)-acetylcytidine (ac(4)C) at the wobble position of elongator tRNA(Met), using acetate and ATP as substrates. First activates an acetate ion to form acetyladenylate (Ac-AMP) and then transfers the acetyl group to tRNA to form ac(4)C34. This chain is tRNA(Met) cytidine acetate ligase, found in Streptococcus pyogenes serotype M3 (strain SSI-1).